A 187-amino-acid chain; its full sequence is MYMQVETRTSSRLHLKRAPGIRSWSLLVGILSIGLAAAYYSGDSLGWKLFYVTGCLFVAVQNLEDWEEAIFNKSTGKVVLKTFSLYRKLLTLCRAGHDQVVVLLSDIRDVNVEEEKVRYFGKGYVVVLRFATGFSHPLTQSAVMGHRSDVEVIAKLITTFLELHRLESPVELSQSSDSEADSPGDQS.

A helical membrane pass occupies residues Gly-20–Gly-42. Ser-168 bears the Phosphoserine mark.

It belongs to the CYBC1 family. In terms of assembly, interacts with CYBB; CYBC1 may act as a chaperone stabilizing Cytochrome b-245 heterodimer.

It localises to the endoplasmic reticulum membrane. Its function is as follows. Functions as a chaperone necessary for a stable expression of the CYBA and CYBB subunits of the cytochrome b-245 heterodimer. Controls the phagocyte respiratory burst and is essential for innate immunity. The protein is Cytochrome b-245 chaperone 1 of Bos taurus (Bovine).